The sequence spans 518 residues: Macrophage receptor MARCO (518 aa).

Over 1-48 (MGSKELLKEEDFLGSTEDRADFDQAMFPVMETFEINDPVPKKRNGGTF) the chain is Cytoplasmic. Residues 49–69 (CMAVMAIHLILLTAGTALLLI) traverse the membrane as a helical; Signal-anchor for type II membrane protein segment. Residues 70 to 518 (QVLNLQEQLQ…HNEDAGVECS (449 aa)) are Extracellular-facing. Residues asparagine 87 and asparagine 138 are each glycosylated (N-linked (GlcNAc...) asparagine). The interval 147-426 (QIKGERGSPG…GESFQRVRIM (280 aa)) is disordered. One can recognise a Collagen-like domain in the interval 149 to 418 (KGERGSPGPK…QKGEKGQKGE (270 aa)). Residues 154-163 (SPGPKGAPGA) are compositionally biased toward low complexity. A compositionally biased stretch (basic and acidic residues) spans 239–250 (KGEHGTKGDKGD). 2 stretches are compositionally biased toward low complexity: residues 293-314 (PGVK…QGAP) and 325-344 (RTGL…PGIA). The span at 410-421 (KGEKGQKGESFQ) shows a compositional bias: basic and acidic residues. Residues 423-518 (VRIMGGTNRG…HNEDAGVECS (96 aa)) enclose the SRCR domain. Disulfide bonds link cysteine 446–cysteine 507, cysteine 459–cysteine 517, and cysteine 487–cysteine 497.

Homotrimer; disulfide-linked. Trimers may assemble in larger oligomers thus resulting in the creation of a large surface capable of interacting with very large ligands. In terms of processing, N-glycosylated. As to expression, expressed in subpopulations of macrophages in the spleen and the medullary cord of lymph nodes (at protein level).

It localises to the cell membrane. In terms of biological role, pattern recognition receptor (PRR) which binds Gram-positive and Gram-negative bacteria. Also plays a role in binding of unopsonized particles by alveolar macrophages. Binds to the secretoglobin SCGB3A2. The chain is Macrophage receptor MARCO (Marco) from Mus musculus (Mouse).